The following is a 438-amino-acid chain: Dol-P-Man:Man(5)GlcNAc(2)-PP-Dol alpha-1,3-mannosyltransferase (438 aa).

A Phosphoserine modification is found at Ser13. A run of 11 helical transmembrane segments spans residues 41 to 61 (YTLL…FWVI), 95 to 115 (TGPL…YYAT), 123 to 143 (MAQN…FLIY), 149 to 169 (VPPF…SIFV), 172 to 192 (LFND…LLAQ), 203 to 223 (LAVS…FLLL), 231 to 251 (ALPK…PFLL), 289 to 309 (FHLA…LCRW), 332 to 352 (PLTP…GICF), 356 to 376 (LHYQ…WAMP), and 407 to 427 (AALH…PQPF).

It belongs to the glycosyltransferase ALG3 family.

Its subcellular location is the endoplasmic reticulum membrane. The enzyme catalyses an alpha-D-Man-(1-&gt;2)-alpha-D-Man-(1-&gt;2)-alpha-D-Man-(1-&gt;3)-[alpha-D-Man-(1-&gt;6)]-beta-D-Man-(1-&gt;4)-beta-D-GlcNAc-(1-&gt;4)-alpha-D-GlcNAc-diphospho-di-trans,poly-cis-dolichol + a di-trans,poly-cis-dolichyl beta-D-mannosyl phosphate = an alpha-D-Man-(1-&gt;2)-alpha-D-Man-(1-&gt;2)-alpha-D-Man-(1-&gt;3)-[alpha-D-Man-(1-&gt;3)-alpha-D-Man-(1-&gt;6)]-beta-D-Man-(1-&gt;4)-beta-D-GlcNAc-(1-&gt;4)-alpha-D-GlcNAc-diphospho-di-trans,poly-cis-dolichol + a di-trans,poly-cis-dolichyl phosphate + H(+). The protein operates within protein modification; protein glycosylation. In terms of biological role, dol-P-Man:Man(5)GlcNAc(2)-PP-Dol alpha-1,3-mannosyltransferase that operates in the biosynthetic pathway of dolichol-linked oligosaccharides, the glycan precursors employed in protein asparagine (N)-glycosylation. The assembly of dolichol-linked oligosaccharides begins on the cytosolic side of the endoplasmic reticulum membrane and finishes in its lumen. The sequential addition of sugars to dolichol pyrophosphate produces dolichol-linked oligosaccharides containing fourteen sugars, including two GlcNAcs, nine mannoses and three glucoses. Once assembled, the oligosaccharide is transferred from the lipid to nascent proteins by oligosaccharyltransferases. In the lumen of the endoplasmic reticulum, adds the first dolichyl beta-D-mannosyl phosphate derived mannose in an alpha-1,3 linkage to Man(5)GlcNAc(2)-PP-dolichol to produce Man(6)GlcNAc(2)-PP-dolichol. Man(6)GlcNAc(2)-PP-dolichol is a substrate for ALG9, the following enzyme in the biosynthetic pathway. The protein is Dol-P-Man:Man(5)GlcNAc(2)-PP-Dol alpha-1,3-mannosyltransferase of Homo sapiens (Human).